The following is a 122-amino-acid chain: Acidic phospholipase A2 (122 aa).

7 cysteine pairs are disulfide-bonded: cysteine 26/cysteine 115, cysteine 28/cysteine 44, cysteine 43/cysteine 95, cysteine 49/cysteine 122, cysteine 50/cysteine 88, cysteine 57/cysteine 81, and cysteine 75/cysteine 86. Ca(2+) is bound by residues tyrosine 27, glycine 29, and glycine 31. The active site involves histidine 47. Aspartate 48 contacts Ca(2+). The active site involves aspartate 89.

It belongs to the phospholipase A2 family. Group II subfamily. D49 sub-subfamily. Ca(2+) serves as cofactor. Post-translationally, contains 7 disulfide bonds. Expressed by the venom gland.

Its subcellular location is the secreted. It carries out the reaction a 1,2-diacyl-sn-glycero-3-phosphocholine + H2O = a 1-acyl-sn-glycero-3-phosphocholine + a fatty acid + H(+). In terms of biological role, snake venom phospholipase A2 (PLA2) that displays low systemic toxicity and causes severe symptoms only at very high concentrations (15 mg/kg). Has neither coagulant nor anticoagulant activity. PLA2 catalyzes the calcium-dependent hydrolysis of the 2-acyl groups in 3-sn-phosphoglycerides. The polypeptide is Acidic phospholipase A2 (Bothrops ammodytoides (Yararanata)).